The primary structure comprises 115 residues: Selenoprotein K homolog (115 aa).

A helical transmembrane segment spans residues 29–49; sequence FIWGILNQITFFFSTLIGGTV. Residues 48 to 115 are disordered; the sequence is TVEPRRRPNN…NSASGSUGPK (68 aa). Positions 58–84 are enriched in gly residues; that stretch reads QGGGRRLAGFDGNGNVTGGSGVGGSGP. Residues 104-115 are compositionally biased toward polar residues; sequence ACNSASGSUGPK. A non-standard amino acid (selenocysteine) is located at residue Sec-112.

It belongs to the selenoprotein K family.

The protein resides in the membrane. The protein is Selenoprotein K homolog (selk) of Dictyostelium discoideum (Social amoeba).